A 146-amino-acid chain; its full sequence is Large ribosomal subunit protein uL15 (146 aa).

Residues 1–13 (MKLHELKPAEGSR) are compositionally biased toward basic and acidic residues. The segment at 1 to 57 (MKLHELKPAEGSRKVRNRVGRGTSSGNGKTSGRGQKGQKARSGVGLRPGFEGGQTPL) is disordered. Positions 23-35 (TSSGNGKTSGRGQ) are enriched in gly residues.

The protein belongs to the universal ribosomal protein uL15 family. As to quaternary structure, part of the 50S ribosomal subunit.

Binds to the 23S rRNA. This chain is Large ribosomal subunit protein uL15, found in Streptococcus thermophilus (strain CNRZ 1066).